The primary structure comprises 162 residues: uncharacterized protein (162 aa).

This sequence belongs to the A.longa ORF167/ORF288 family.

It is found in the plastid. This is an uncharacterized protein from Euglena longa (Euglenophycean alga).